The chain runs to 46 residues: uncharacterized protein (46 aa).

This is an uncharacterized protein from Archaeoglobus fulgidus (strain ATCC 49558 / DSM 4304 / JCM 9628 / NBRC 100126 / VC-16).